The chain runs to 189 residues: Probable transcriptional regulator Rv1176c (189 aa).

Belongs to the PadR family. In terms of assembly, homodimer.

It localises to the cytoplasm. Its function is as follows. Probable transcriptional regulator that may help mitigate the effect of oxidative stress and help mycobacteria survive inside macrophages. Binds to its own promoter region. The chain is Probable transcriptional regulator Rv1176c from Mycobacterium tuberculosis (strain ATCC 25618 / H37Rv).